A 1440-amino-acid polypeptide reads, in one-letter code: Gag-Pro-Pol polyprotein (1440 aa).

The N-myristoyl glycine; by host moiety is linked to residue Gly2. The segment at 95 to 116 (EAPPSAPLAEDPQKPPPYPEQA) is disordered. A PTAP/PSAP motif motif is present at residues 98–101 (PSAP). A PPXY motif motif is present at residues 109 to 112 (PPPY). 2 CCHC-type zinc fingers span residues 349–366 (QPCFRCGQVGHWSRDCKQ) and 372–389 (GPCPVCQDPTHWKRDCPQ). The Peptidase A2 domain maps to 457–535 (VQALLDTGAD…NQWTILGRDA (79 aa)). Asp462 functions as the For protease activity; shared with dimeric partner in the catalytic mechanism. Residues 593-783 (LEAKHIEPYQ…GPIHFLGQVI (191 aa)) enclose the Reverse transcriptase domain. Mg(2+)-binding residues include Asp659, Asp734, Asp735, Asp1019, Glu1052, Asp1074, Asp1135, Asp1208, and Asp1265. The region spanning 1010–1143 (INHAPCLFSD…TDALMLAPLL (134 aa)) is the RNase H type-1 domain. The Integrase catalytic domain maps to 1197 to 1366 (RGHAPNDIWQ…PPVPEDTLPP (170 aa)). The integrase-type DNA-binding region spans 1371 to 1420 (KWYYYKIPGLTNSRWSGPVQSLKEAAGAALIPVGGSYLWIPWRLLKRGIC).

As to quaternary structure, interacts with human TSG101. This interaction is essential for budding and release of viral particles. Mg(2+) is required as a cofactor. Post-translationally, specific enzymatic cleavages by the viral protease yield mature proteins. The polyprotein is cleaved during and after budding, this process is termed maturation. The protease is autoproteolytically processed at its N- and C-termini.

The protein resides in the virion. The enzyme catalyses Endonucleolytic cleavage to 5'-phosphomonoester.. It carries out the reaction DNA(n) + a 2'-deoxyribonucleoside 5'-triphosphate = DNA(n+1) + diphosphate. Its function is as follows. Matrix protein p19 targets Gag, Gag-Pro and Gag-Pro-Pol polyproteins to the plasma membrane via a multipartite membrane binding signal, that includes its myristoylated N-terminus. Also mediates nuclear localization of the preintegration complex. In terms of biological role, capsid protein p24 forms the conical core of the virus that encapsulates the genomic RNA-nucleocapsid complex. Nucleocapsid protein p15 is involved in the packaging and encapsidation of two copies of the genome. Functionally, the aspartyl protease mediates proteolytic cleavages of Gag, Gag-Pro and Gag-Pro-Pol polyproteins during or shortly after the release of the virion from the plasma membrane. Cleavages take place as an ordered, step-wise cascade to yield mature proteins. This process is called maturation. Displays maximal activity during the budding process just prior to particle release from the cell. Hydrolyzes host EIF4GI in order to shut off the capped cellular mRNA translation. The resulting inhibition of cellular protein synthesis serves to ensure maximal viral gene expression and to evade host immune response. Its function is as follows. Reverse transcriptase (RT) is a multifunctional enzyme that converts the viral RNA genome into dsDNA in the cytoplasm, shortly after virus entry into the cell. This enzyme displays a DNA polymerase activity that can copy either DNA or RNA templates, and a ribonuclease H (RNase H) activity that cleaves the RNA strand of RNA-DNA heteroduplexes in a partially processive 3' to 5'-endonucleasic mode. Conversion of viral genomic RNA into dsDNA requires many steps. A tRNA-Pro binds to the primer-binding site (PBS) situated at the 5'-end of the viral RNA. RT uses the 3' end of the tRNA primer to perform a short round of RNA-dependent minus-strand DNA synthesis. The reading proceeds through the U5 region and ends after the repeated (R) region which is present at both ends of viral RNA. The portion of the RNA-DNA heteroduplex is digested by the RNase H, resulting in a ssDNA product attached to the tRNA primer. This ssDNA/tRNA hybridizes with the identical R region situated at the 3' end of viral RNA. This template exchange, known as minus-strand DNA strong stop transfer, can be either intra- or intermolecular. RT uses the 3' end of this newly synthesized short ssDNA to perform the RNA-dependent minus-strand DNA synthesis of the whole template. RNase H digests the RNA template except for a polypurine tract (PPT) situated at the 5' end of the genome. It is not clear if both polymerase and RNase H activities are simultaneous. RNase H probably can proceed both in a polymerase-dependent (RNA cut into small fragments by the same RT performing DNA synthesis) and a polymerase-independent mode (cleavage of remaining RNA fragments by free RTs). Secondly, RT performs DNA-directed plus-strand DNA synthesis using the PPT that has not been removed by RNase H as primer. PPT and tRNA primers are then removed by RNase H. The 3' and 5' ssDNA PBS regions hybridize to form a circular dsDNA intermediate. Strand displacement synthesis by RT to the PBS and PPT ends produces a blunt ended, linear dsDNA copy of the viral genome that includes long terminal repeats (LTRs) at both ends. In terms of biological role, integrase catalyzes viral DNA integration into the host chromosome, by performing a series of DNA cutting and joining reactions. This enzyme activity takes place after virion entry into a cell and reverse transcription of the RNA genome in dsDNA. The first step in the integration process is 3' processing. This step requires a complex comprising the viral genome, matrix protein, and integrase. This complex is called the pre-integration complex (PIC). The integrase protein removes 2 nucleotides from each 3' end of the viral DNA, leaving recessed dinucleotides OH's at the 3' ends. In the second step, the PIC access cell chromosomes during cell division. The third step, termed strand transfer, the integrase protein joins the previously processed 3' ends to the 5'-ends of strands of target cellular DNA at the site of integration. The 5'-ends are produced by integrase-catalyzed staggered cuts, 5 bp apart. A Y-shaped, gapped, recombination intermediate results, with the 5'-ends of the viral DNA strands and the 3' ends of target DNA strands remaining unjoined, flanking a gap of 5 bp. The last step is viral DNA integration into host chromosome. This involves host DNA repair synthesis in which the 5 bp gaps between the unjoined strands (see above) are filled in and then ligated. In Human T-cell leukemia virus 3 (strain 2026ND) (HTLV-3), this protein is Gag-Pro-Pol polyprotein (gag-pro-pol).